We begin with the raw amino-acid sequence, 299 residues long: Oxygen-dependent coproporphyrinogen-III oxidase (299 aa).

Substrate is bound at residue Ser92. Positions 96 and 106 each coordinate a divalent metal cation. Residue His106 is the Proton donor of the active site. 108–110 (NVR) is a substrate binding site. His145 and His175 together coordinate a divalent metal cation. The tract at residues 239 to 274 (YVEFNLVYDRGTLFGLQSGGRAESILMSLPPQVRWE) is important for dimerization. 257 to 259 (GGR) lines the substrate pocket.

This sequence belongs to the aerobic coproporphyrinogen-III oxidase family. In terms of assembly, homodimer. Requires a divalent metal cation as cofactor.

It is found in the cytoplasm. The enzyme catalyses coproporphyrinogen III + O2 + 2 H(+) = protoporphyrinogen IX + 2 CO2 + 2 H2O. It participates in porphyrin-containing compound metabolism; protoporphyrin-IX biosynthesis; protoporphyrinogen-IX from coproporphyrinogen-III (O2 route): step 1/1. Involved in the heme biosynthesis. Catalyzes the aerobic oxidative decarboxylation of propionate groups of rings A and B of coproporphyrinogen-III to yield the vinyl groups in protoporphyrinogen-IX. This chain is Oxygen-dependent coproporphyrinogen-III oxidase, found in Xanthomonas campestris pv. campestris (strain 8004).